The following is a 104-amino-acid chain: Co-chaperonin GroES 3 (104 aa).

It belongs to the GroES chaperonin family. As to quaternary structure, heptamer of 7 subunits arranged in a ring. Interacts with the chaperonin GroEL.

It localises to the cytoplasm. Functionally, together with the chaperonin GroEL, plays an essential role in assisting protein folding. The GroEL-GroES system forms a nano-cage that allows encapsulation of the non-native substrate proteins and provides a physical environment optimized to promote and accelerate protein folding. GroES binds to the apical surface of the GroEL ring, thereby capping the opening of the GroEL channel. The protein is Co-chaperonin GroES 3 of Bradyrhizobium diazoefficiens (strain JCM 10833 / BCRC 13528 / IAM 13628 / NBRC 14792 / USDA 110).